The following is a 548-amino-acid chain: Fumarate hydratase class I, anaerobic (548 aa).

Cys-105 contributes to the [4Fe-4S] cluster binding site. Lys-192 carries the N6-acetyllysine modification. Residues Cys-224 and Cys-318 each contribute to the [4Fe-4S] cluster site.

Belongs to the class-I fumarase family. As to quaternary structure, homodimer. It depends on [4Fe-4S] cluster as a cofactor.

The enzyme catalyses (S)-malate = fumarate + H2O. It catalyses the reaction (S,S)-tartrate = oxaloacetate + H2O. Its function is as follows. Catalyzes the reversible hydration of fumarate to (S)-malate. Functions in the generation of fumarate for use as an anaerobic electron acceptor. To a lesser extent, also displays D-tartrate dehydratase activity, but is not able to convert (R)-malate, L-tartrate or meso-tartrate. Is required for anaerobic growth on D-tartrate. The polypeptide is Fumarate hydratase class I, anaerobic (Escherichia coli (strain K12)).